The chain runs to 342 residues: MKLELFDFDLPERLIAQVPLEKRDASRLMVLNKQTGEVTHDTFSQITDYFQTGDCLVLNNTRVLPARLFGMKEDTGAKVELLLLKQEEGDKWETLVKPAKRVKKGTVITFGDGRLQAVCTEELEHGGRKVEFQYTGIFYEVLESLGEMPLPPYIKEQLDDRERYQTVYSKEVGSAAAPTAGLHFTNELLDALKEKGVHIAFITLHVGLGTFRPVSADRIEEHEMHAEFYEMNEETAAELNRVRKEGGRIISVGTTSTRTLETIASAHDGEFKASSGWTSIFIYPGYTFKAIDGMITNFHLPKSSLIMLVSALAGREHVLKAYNEAVKEEYRFFSFGDAMLIQ.

The protein belongs to the QueA family. Monomer.

Its subcellular location is the cytoplasm. The enzyme catalyses 7-aminomethyl-7-carbaguanosine(34) in tRNA + S-adenosyl-L-methionine = epoxyqueuosine(34) in tRNA + adenine + L-methionine + 2 H(+). It functions in the pathway tRNA modification; tRNA-queuosine biosynthesis. In terms of biological role, transfers and isomerizes the ribose moiety from AdoMet to the 7-aminomethyl group of 7-deazaguanine (preQ1-tRNA) to give epoxyqueuosine (oQ-tRNA). The chain is S-adenosylmethionine:tRNA ribosyltransferase-isomerase from Bacillus pumilus (strain SAFR-032).